A 417-amino-acid chain; its full sequence is Actin-related protein 10 (417 aa).

This sequence belongs to the actin family. In terms of assembly, subunit of dynactin, a multiprotein complex part of a tripartite complex with dynein and a adapter, such as BICDL1, BICD2 or HOOK3. The dynactin complex is built around ACTR1A/ACTB filament and consists of an actin-related filament composed of a shoulder domain, a pointed end and a barbed end. Its length is defined by its flexible shoulder domain. The soulder is composed of 2 DCTN1 subunits, 4 DCTN2 and 2 DCTN3. The 4 DCNT2 (via N-terminus) bind the ACTR1A filament and act as molecular rulers to determine the length. The pointed end is important for binding dynein-dynactin cargo adapters. Consists of 4 subunits: ACTR10, DCNT4, DCTN5 and DCTN6. The barbed end is composed of a CAPZA1:CAPZB heterodimers, which binds ACTR1A/ACTB filament and dynactin and stabilizes dynactin.

It is found in the cytoplasm. It localises to the cytoskeleton. Functionally, part of the dynactin complex that activates the molecular motor dynein for ultra-processive transport along microtubules. This Mus musculus (Mouse) protein is Actin-related protein 10 (Actr10).